The sequence spans 140 residues: ATP synthase epsilon chain (140 aa).

It belongs to the ATPase epsilon chain family. In terms of assembly, F-type ATPases have 2 components, CF(1) - the catalytic core - and CF(0) - the membrane proton channel. CF(1) has five subunits: alpha(3), beta(3), gamma(1), delta(1), epsilon(1). CF(0) has three main subunits: a, b and c.

It is found in the cell inner membrane. Produces ATP from ADP in the presence of a proton gradient across the membrane. The chain is ATP synthase epsilon chain from Xanthomonas oryzae pv. oryzae (strain MAFF 311018).